The primary structure comprises 467 residues: Chromosomal replication initiator protein DnaA (467 aa).

Residues 1 to 87 (MSSSLWLQCL…VGSRPVVAPK (87 aa)) are domain I, interacts with DnaA modulators. The domain II stretch occupies residues 87 to 130 (KPAPVRTAADVAAESSAPAQLAQRKPIHKTWDDDSAAADITHRS). The domain III, AAA+ region stretch occupies residues 131–347 (NVNPKHKFNN…GALNRVIANA (217 aa)). ATP-binding residues include Gly-175, Gly-177, Lys-178, and Thr-179. A domain IV, binds dsDNA region spans residues 348–467 (NFTGRPITID…YSNLIRTLSS (120 aa)).

This sequence belongs to the DnaA family. In terms of assembly, oligomerizes as a right-handed, spiral filament on DNA at oriC.

Its subcellular location is the cytoplasm. Functionally, plays an essential role in the initiation and regulation of chromosomal replication. ATP-DnaA binds to the origin of replication (oriC) to initiate formation of the DNA replication initiation complex once per cell cycle. Binds the DnaA box (a 9 base pair repeat at the origin) and separates the double-stranded (ds)DNA. Forms a right-handed helical filament on oriC DNA; dsDNA binds to the exterior of the filament while single-stranded (ss)DNA is stabiized in the filament's interior. The ATP-DnaA-oriC complex binds and stabilizes one strand of the AT-rich DNA unwinding element (DUE), permitting loading of DNA polymerase. After initiation quickly degrades to an ADP-DnaA complex that is not apt for DNA replication. Binds acidic phospholipids. In Vibrio cholerae serotype O1 (strain ATCC 39315 / El Tor Inaba N16961), this protein is Chromosomal replication initiator protein DnaA.